We begin with the raw amino-acid sequence, 593 residues long: A-type ATP synthase subunit A (593 aa).

236–243 provides a ligand contact to ATP; the sequence is GPFGSGKT.

Belongs to the ATPase alpha/beta chains family. In terms of assembly, has multiple subunits with at least A(3), B(3), C, D, E, F, H, I and proteolipid K(x).

The protein resides in the cell membrane. It catalyses the reaction ATP + H2O + 4 H(+)(in) = ADP + phosphate + 5 H(+)(out). Its function is as follows. Produces ATP from ADP in the presence of a proton gradient across the membrane. The archaeal alpha chain is a catalytic subunit. In terms of biological role, component of the A-type ATP synthase that produces ATP from ADP in the presence of a proton gradient across the membrane. The A chain is the catalytic subunit. The polypeptide is A-type ATP synthase subunit A (Pyrobaculum aerophilum (strain ATCC 51768 / DSM 7523 / JCM 9630 / CIP 104966 / NBRC 100827 / IM2)).